The primary structure comprises 344 residues: Anthranilate phosphoribosyltransferase (344 aa).

Residues Gly-84, 87 to 88 (GD), Thr-92, 94 to 97 (NIST), 112 to 120 (KHGGRSVSS), and Ser-124 each bind 5-phospho-alpha-D-ribose 1-diphosphate. Gly-84 serves as a coordination point for anthranilate. Ser-96 provides a ligand contact to Mg(2+). Arg-170 lines the anthranilate pocket. Residues Asp-229 and Glu-230 each coordinate Mg(2+).

The protein belongs to the anthranilate phosphoribosyltransferase family. As to quaternary structure, homodimer. The cofactor is Mg(2+).

The catalysed reaction is N-(5-phospho-beta-D-ribosyl)anthranilate + diphosphate = 5-phospho-alpha-D-ribose 1-diphosphate + anthranilate. It participates in amino-acid biosynthesis; L-tryptophan biosynthesis; L-tryptophan from chorismate: step 2/5. Catalyzes the transfer of the phosphoribosyl group of 5-phosphorylribose-1-pyrophosphate (PRPP) to anthranilate to yield N-(5'-phosphoribosyl)-anthranilate (PRA). The protein is Anthranilate phosphoribosyltransferase of Janthinobacterium sp. (strain Marseille) (Minibacterium massiliensis).